A 355-amino-acid chain; its full sequence is DNA-directed RNA polymerase subunit alpha (355 aa).

An alpha N-terminal domain (alpha-NTD) region spans residues 1–248 (MYYNNDVSLC…EQLQPFISSD (248 aa)). The tract at residues 267-355 (YDPVLLRKVD…ELAKQHTDED (89 aa)) is alpha C-terminal domain (alpha-CTD).

This sequence belongs to the RNA polymerase alpha chain family. In terms of assembly, homodimer. The RNAP catalytic core consists of 2 alpha, 1 beta, 1 beta' and 1 omega subunit. When a sigma factor is associated with the core the holoenzyme is formed, which can initiate transcription.

The catalysed reaction is RNA(n) + a ribonucleoside 5'-triphosphate = RNA(n+1) + diphosphate. Its function is as follows. DNA-dependent RNA polymerase catalyzes the transcription of DNA into RNA using the four ribonucleoside triphosphates as substrates. This is DNA-directed RNA polymerase subunit alpha from Wolbachia pipientis wMel.